The primary structure comprises 219 residues: Phosphatidylserine decarboxylase proenzyme (219 aa).

S188 serves as the catalytic Schiff-base intermediate with substrate; via pyruvic acid. S188 bears the Pyruvic acid (Ser); by autocatalysis mark.

This sequence belongs to the phosphatidylserine decarboxylase family. PSD-A subfamily. In terms of assembly, heterodimer of a large membrane-associated beta subunit and a small pyruvoyl-containing alpha subunit. Requires pyruvate as cofactor. In terms of processing, is synthesized initially as an inactive proenzyme. Formation of the active enzyme involves a self-maturation process in which the active site pyruvoyl group is generated from an internal serine residue via an autocatalytic post-translational modification. Two non-identical subunits are generated from the proenzyme in this reaction, and the pyruvate is formed at the N-terminus of the alpha chain, which is derived from the carboxyl end of the proenzyme. The post-translation cleavage follows an unusual pathway, termed non-hydrolytic serinolysis, in which the side chain hydroxyl group of the serine supplies its oxygen atom to form the C-terminus of the beta chain, while the remainder of the serine residue undergoes an oxidative deamination to produce ammonia and the pyruvoyl prosthetic group on the alpha chain.

The protein resides in the cell membrane. The enzyme catalyses a 1,2-diacyl-sn-glycero-3-phospho-L-serine + H(+) = a 1,2-diacyl-sn-glycero-3-phosphoethanolamine + CO2. It functions in the pathway phospholipid metabolism; phosphatidylethanolamine biosynthesis; phosphatidylethanolamine from CDP-diacylglycerol: step 2/2. Functionally, catalyzes the formation of phosphatidylethanolamine (PtdEtn) from phosphatidylserine (PtdSer). The polypeptide is Phosphatidylserine decarboxylase proenzyme (Ruegeria pomeroyi (strain ATCC 700808 / DSM 15171 / DSS-3) (Silicibacter pomeroyi)).